Consider the following 146-residue polypeptide: Aminoglycoside N(6')-acetyltransferase type 1 (146 aa).

One can recognise an N-acetyltransferase domain in the interval 1–146; it reads MNIMPISESQ…RVVYFKKNIG (146 aa). Substrate contacts are provided by tryptophan 22, histidine 25, tyrosine 66, and glutamate 79. Residue 81–83 participates in acetyl-CoA binding; the sequence is IFV. Aspartate 115 contacts substrate. An acetyl-CoA-binding site is contributed by asparagine 120. Substrate is bound at residue glutamate 136.

Homodimer.

The catalysed reaction is kanamycin B + acetyl-CoA = N(6')-acetylkanamycin B + CoA + H(+). Its function is as follows. Catalyzes the transfer of an acetyl group from acetyl-CoA to the 6'-amino group of aminoglycoside molecules conferring resistance to antibiotics containing the purpurosamine ring including amikacin, kanamycin, tobramycin and netilmicin. This is Aminoglycoside N(6')-acetyltransferase type 1 from Acinetobacter baumannii.